A 175-amino-acid chain; its full sequence is Ribosome maturation factor RimM (175 aa).

Residues 96-172 (PDTYYDHQLE…LIEIDPPDGL (77 aa)) enclose the PRC barrel domain.

It belongs to the RimM family. As to quaternary structure, binds ribosomal protein uS19.

The protein localises to the cytoplasm. Functionally, an accessory protein needed during the final step in the assembly of 30S ribosomal subunit, possibly for assembly of the head region. Essential for efficient processing of 16S rRNA. May be needed both before and after RbfA during the maturation of 16S rRNA. It has affinity for free ribosomal 30S subunits but not for 70S ribosomes. The polypeptide is Ribosome maturation factor RimM (Mycolicibacterium paratuberculosis (strain ATCC BAA-968 / K-10) (Mycobacterium paratuberculosis)).